We begin with the raw amino-acid sequence, 305 residues long: Glycine--tRNA ligase alpha subunit (305 aa).

This sequence belongs to the class-II aminoacyl-tRNA synthetase family. As to quaternary structure, tetramer of two alpha and two beta subunits.

It localises to the cytoplasm. The enzyme catalyses tRNA(Gly) + glycine + ATP = glycyl-tRNA(Gly) + AMP + diphosphate. The chain is Glycine--tRNA ligase alpha subunit from Ligilactobacillus salivarius (strain UCC118) (Lactobacillus salivarius).